The chain runs to 270 residues: Orotidine 5'-phosphate decarboxylase (270 aa).

Residues D43, 65–67 (KTH), 96–105 (DRKFGDIGST), Y217, and R236 each bind substrate. K98 functions as the Proton donor in the catalytic mechanism.

It belongs to the OMP decarboxylase family.

It carries out the reaction orotidine 5'-phosphate + H(+) = UMP + CO2. It participates in pyrimidine metabolism; UMP biosynthesis via de novo pathway; UMP from orotate: step 2/2. This is Orotidine 5'-phosphate decarboxylase (URA3) from Aureobasidium pullulans (Black yeast).